The sequence spans 93 residues: Integration host factor subunit beta (93 aa).

It belongs to the bacterial histone-like protein family. As to quaternary structure, heterodimer of an alpha and a beta chain.

Its function is as follows. This protein is one of the two subunits of integration host factor, a specific DNA-binding protein that functions in genetic recombination as well as in transcriptional and translational control. The chain is Integration host factor subunit beta from Aliivibrio fischeri (strain ATCC 700601 / ES114) (Vibrio fischeri).